The chain runs to 520 residues: MSDTHPSQTTPRDAADSVATLSAPFPTMPGFAELGERFFTRLRPTPLPSAYLVSVAPNAAALLGMPVEAASEPDFIEAFVGNSVPDWADPLATVYSGHQFGVWAGQLGDGRAIRLAQAQTDTGPWEIQLKGAGLTPYSRMADGRAVLRSSIREYLCSEAMAALGVPTTRALSIIGSDAPVRRETIETAAVVTRLAPTFIRFGHFEHFAAHEDVAALRQLADFVINNFMPACREAAQPYQALLREVSLRTADMVAHWQAIGFCHGVMNTDNMSILGLTIDYGPFGFLDAFDANHICNHSDTQGRYAYSQQPQVAFWNLHCLAQALLPLWLEPGADEAARDGAVAQAREALDPFRDRYASEFFRHYRAKLGIHMPAGGDKEDEPLLTSLFQLLHEQHVDYTLFWRNLARISSADGSGDAPVRDLFLDRAAWDTWAESYRNRLRAEQSDDAARRVAMLAVNPKYVLRNHLAEIAIRRAREKDFSEVDRLLAVLSRPFDEQPEAEAYAALPPDWAGGLEVSCSS.

ATP-binding residues include Gly-108, Gly-110, Arg-111, Lys-130, Asp-142, Gly-143, Arg-193, and Arg-200. Asp-269 serves as the catalytic Proton acceptor. Positions 270 and 279 each coordinate Mg(2+). Asp-279 contributes to the ATP binding site.

It belongs to the SELO family. Mg(2+) is required as a cofactor. Requires Mn(2+) as cofactor.

The enzyme catalyses L-seryl-[protein] + ATP = 3-O-(5'-adenylyl)-L-seryl-[protein] + diphosphate. It catalyses the reaction L-threonyl-[protein] + ATP = 3-O-(5'-adenylyl)-L-threonyl-[protein] + diphosphate. It carries out the reaction L-tyrosyl-[protein] + ATP = O-(5'-adenylyl)-L-tyrosyl-[protein] + diphosphate. The catalysed reaction is L-histidyl-[protein] + UTP = N(tele)-(5'-uridylyl)-L-histidyl-[protein] + diphosphate. The enzyme catalyses L-seryl-[protein] + UTP = O-(5'-uridylyl)-L-seryl-[protein] + diphosphate. It catalyses the reaction L-tyrosyl-[protein] + UTP = O-(5'-uridylyl)-L-tyrosyl-[protein] + diphosphate. Functionally, nucleotidyltransferase involved in the post-translational modification of proteins. It can catalyze the addition of adenosine monophosphate (AMP) or uridine monophosphate (UMP) to a protein, resulting in modifications known as AMPylation and UMPylation. The chain is Protein nucleotidyltransferase YdiU from Cupriavidus pinatubonensis (strain JMP 134 / LMG 1197) (Cupriavidus necator (strain JMP 134)).